Here is a 235-residue protein sequence, read N- to C-terminus: Transmembrane protein 176A (235 aa).

At Ser-38 the chain carries Phosphoserine. A run of 4 helical transmembrane segments spans residues 55-75 (VASWVMQIVLGILSAVLGGFF), 86-106 (SGAAIWTGAVAVLAGAAAFIY), 113-133 (YWALLRTLLTLAAFSTAIAAL), and 193-213 (AMLLGVWILLLLASLTPLWLY).

It belongs to the TMEM176 family. Interacts with MCOLN2.

The protein resides in the membrane. The chain is Transmembrane protein 176A (TMEM176A) from Homo sapiens (Human).